Here is a 175-residue protein sequence, read N- to C-terminus: ATP synthase subunit b 2 (175 aa).

Residues 20 to 40 (LIFWTTITFVLVLIILKKIAW) form a helical membrane-spanning segment.

This sequence belongs to the ATPase B chain family. As to quaternary structure, F-type ATPases have 2 components, F(1) - the catalytic core - and F(0) - the membrane proton channel. F(1) has five subunits: alpha(3), beta(3), gamma(1), delta(1), epsilon(1). F(0) has four main subunits: a(1), b(2) and c(10-14). The alpha and beta chains form an alternating ring which encloses part of the gamma chain. F(1) is attached to F(0) by a central stalk formed by the gamma and epsilon chains, while a peripheral stalk is formed by the delta and b chains.

It localises to the cell inner membrane. In terms of biological role, f(1)F(0) ATP synthase produces ATP from ADP in the presence of a proton or sodium gradient. F-type ATPases consist of two structural domains, F(1) containing the extramembraneous catalytic core and F(0) containing the membrane proton channel, linked together by a central stalk and a peripheral stalk. During catalysis, ATP synthesis in the catalytic domain of F(1) is coupled via a rotary mechanism of the central stalk subunits to proton translocation. Component of the F(0) channel, it forms part of the peripheral stalk, linking F(1) to F(0). The polypeptide is ATP synthase subunit b 2 (Chlorobium luteolum (strain DSM 273 / BCRC 81028 / 2530) (Pelodictyon luteolum)).